The sequence spans 574 residues: Developmental and secondary metabolism regulator veA (574 aa).

4 disordered regions span residues 1 to 22, 39 to 60, 255 to 500, and 513 to 540; these read MATR…SRIT, ERAR…VDPP, RSSD…GAGK, and RSYE…YPRR. The Velvet domain maps to 25–230; sequence GKKLTYKLNV…AEQGCRVRIR (206 aa). Positions 39–44 match the Nuclear localization signal motif; sequence ERARAC. 2 stretches are compositionally biased toward pro residues: residues 314–323 and 330–341; these read RPLPPAPGPA and PAPPAPPAPPSH. Polar residues-rich tracts occupy residues 343–353, 385–394, 406–415, and 448–458; these read PGYQSHLSFGS, HARNPSTSAE, RMSTERSSYP, and VAQSAAPRSQT. Positions 457–498 are PEST; that stretch reads QTPSSSLVPSLPPLKALSGDYPNNLSQSSSSTSQSPSHDLGA. Low complexity-rich tracts occupy residues 459–474 and 482–493; these read PSSS…KALS and SQSSSSTSQSPS. The segment covering 513–525 has biased composition (basic and acidic residues); sequence RSYEDSFGHDDRP.

It belongs to the velvet family. VeA subfamily. As to quaternary structure, component of the heterotrimeric velvet complex composed of laeA, veA and velB; VeA acting as a bridging protein between laeA and velB.

The protein resides in the nucleus. It is found in the cytoplasm. Functionally, component of the velvet transcription factor complex that controls sexual/asexual developmental ratio in response to light, promoting sexual development in the darkness while stimulating asexual sporulation under illumination. The velvet complex hat acts as a global regulator for secondary metabolite gene expression. Controls the expression of the cyclopiazonic acid, aflatrem, and aflatoxin gene clusters. Controls the expression of the sclerotium-specific pigment asparasone A gene cluster. Controls the expression of the aflavarin gene cluster. also controls the production of hydrolases and other extracellular proteins during growth on natural starch-based substrates. Regulates genes involved in the High Osmolarity Glycerol (HOG) signaling pathway. Required for the conidial and sclerotial density-dependent production. The protein is Developmental and secondary metabolism regulator veA of Aspergillus flavus (strain ATCC 200026 / FGSC A1120 / IAM 13836 / NRRL 3357 / JCM 12722 / SRRC 167).